A 198-amino-acid polypeptide reads, in one-letter code: Probable GTP-binding protein EngB (198 aa).

The EngB-type G domain occupies 22–195 (HRNEVAFVGR…IDKLFLEFAT (174 aa)). GTP is bound by residues 30-37 (GRSNVGKS), 57-61 (GKTRL), 75-78 (DLPG), 142-145 (TKSD), and 174-176 (YSS). Mg(2+) is bound by residues S37 and T59.

This sequence belongs to the TRAFAC class TrmE-Era-EngA-EngB-Septin-like GTPase superfamily. EngB GTPase family. It depends on Mg(2+) as a cofactor.

In terms of biological role, necessary for normal cell division and for the maintenance of normal septation. This Clostridium botulinum (strain Eklund 17B / Type B) protein is Probable GTP-binding protein EngB.